We begin with the raw amino-acid sequence, 492 residues long: GTPase-activating protein MSB4 (492 aa).

The Rab-GAP TBC domain maps to 147 to 367 (GIPAEWRGNA…RIWDCLFYEE (221 aa)).

The protein resides in the cytoplasm. Its subcellular location is the bud. The protein localises to the bud neck. Functionally, regulates exocytosis by functioning as a GAP for SEC4. Also required for efficient polarization of the actin patches. The protein is GTPase-activating protein MSB4 (MSB4) of Saccharomyces cerevisiae (strain ATCC 204508 / S288c) (Baker's yeast).